The following is a 657-amino-acid chain: Probable potassium transport system protein Kup (657 aa).

Helical transmembrane passes span 15–35 (SFLI…LYVM), 48–68 (ITPD…TLLT), 100–120 (WLII…MLTP), 147–167 (IIII…HFGT), 173–193 (IFGP…IVNL), 219–239 (LGFF…ALYS), 251–271 (LTWP…AAWI), 292–312 (MMPS…AIIA), 348–368 (IYMP…VLYF), 378–398 (YGLS…NYLL), 403–423 (PLPI…SFLI), and 431–451 (KGGF…YIWI).

Belongs to the HAK/KUP transporter (TC 2.A.72) family.

It localises to the cell membrane. It carries out the reaction K(+)(in) + H(+)(in) = K(+)(out) + H(+)(out). Functionally, transport of potassium into the cell. Likely operates as a K(+):H(+) symporter. This chain is Probable potassium transport system protein Kup, found in Clostridium perfringens (strain SM101 / Type A).